The chain runs to 360 residues: uncharacterized protein (360 aa).

The 232-residue stretch at 4–235 (LSLQHIQKIY…PANMFVSGFI (232 aa)) folds into the ABC transporter domain. 37 to 44 (GPSGCGKS) contacts ATP.

The protein belongs to the ABC transporter superfamily.

This is an uncharacterized protein from Escherichia coli (strain K12).